The following is a 263-amino-acid chain: Leukocyte-associated immunoglobulin-like receptor 1 (263 aa).

The first 21 residues, 1-21 (MPLHSVIVLVLVLCLGWKSNT), serve as a signal peptide directing secretion. An Ig-like C2-type domain is found at 27–112 (SDFTICAEPG…VWSQRSNDLQ (86 aa)). A disulfide bond links Cys-49 and Cys-96. The N-linked (GlcNAc...) asparagine glycan is linked to Asn-87. The chain crosses the membrane as a helical span at residues 144–164 (ILTVVSVIFLLCLSLFLFCFL). 2 short sequence motifs (ITIM motif) span residues 225–230 (VTYAQL) and 255–260 (STYAAI). A phosphotyrosine mark is found at Tyr-227 and Tyr-257.

In terms of assembly, interacts with SH2 domains of tyrosine-protein phosphatases PTPN6 and PTPN11. The interaction with PTPN6 is constitutive. Interacts with the SH2 domain of CSK. Binds with high affinity to extracellular matrix collagens, the interaction is functionally important. Post-translationally, phosphorylation at Tyr-227 and Tyr-257 activates it. May be phosphorylated by LCK. In terms of processing, N-glycosylated. In terms of tissue distribution, expressed in lymphoid and non-lymphoid organs.

The protein resides in the membrane. Its function is as follows. Functions as an inhibitory receptor that plays a constitutive negative regulatory role on cytolytic function of natural killer (NK) cells, B-cells and T-cells. Activation by Tyr phosphorylation results in recruitment and activation of the phosphatases PTPN6 and PTPN11. It also reduces the increase of intracellular calcium evoked by B-cell receptor ligation. May also play its inhibitory role independently of SH2-containing phosphatases. Modulates cytokine production in CD4+ T-cells, down-regulating IL2 and IFNG production while inducing secretion of transforming growth factor beta. Also down-regulates IgG and IgE production in B-cells as well as IL8, IL10 and TNF secretion. Inhibits proliferation and induces apoptosis in myeloid leukemia cell lines as well as prevents nuclear translocation of NF-kappa-B p65 subunit/RELA and phosphorylation of I-kappa-B alpha/CHUK in these cells. Inhibits the differentiation of peripheral blood precursors towards dendritic cells. In Rattus norvegicus (Rat), this protein is Leukocyte-associated immunoglobulin-like receptor 1 (Lair1).